A 512-amino-acid polypeptide reads, in one-letter code: Glycine betaine transporter OpuD (512 aa).

Transmembrane regions (helical) follow at residues 5-25 (ISSV…WGVI), 45-65 (FGWY…FLIF), 82-102 (FGLL…GLVF), 135-155 (FFHW…CIAY), 186-206 (IDCI…GLGA), 222-242 (AFIV…LSAW), 257-277 (MVLA…VLIM), 312-332 (WTIF…IFIA), 343-363 (FLIG…SIFG), 395-415 (LTMV…ITSA), 441-461 (WGII…LAAL), and 464-484 (TAIL…ASLY).

It belongs to the BCCT transporter (TC 2.A.15) family.

The protein resides in the cell membrane. Its activity is regulated as follows. Activity is stimulated by high osmolarity. High-affinity uptake of glycine betaine. Does not mediate either carnitine or choline uptake. The sequence is that of Glycine betaine transporter OpuD (opuD) from Bacillus subtilis (strain 168).